A 354-amino-acid chain; its full sequence is Phosphatidylserine decarboxylase proenzyme (354 aa).

The chain crosses the membrane as a helical span at residues 18 to 36; it reads YLITGVTILSFILMFQYKY. Residues Asp-139, His-198, and Ser-308 each act as charge relay system; for autoendoproteolytic cleavage activity in the active site. Ser-308 (schiff-base intermediate with substrate; via pyruvic acid; for decarboxylase activity) is an active-site residue. A Pyruvic acid (Ser); by autocatalysis modification is found at Ser-308.

Belongs to the phosphatidylserine decarboxylase family. PSD-B subfamily. Eukaryotic type I sub-subfamily. As to quaternary structure, heterodimer of a large membrane-associated beta subunit and a small pyruvoyl-containing alpha subunit. Requires pyruvate as cofactor. Is synthesized initially as an inactive proenzyme. Formation of the active enzyme involves a self-maturation process in which the active site pyruvoyl group is generated from an internal serine residue via an autocatalytic post-translational modification. Two non-identical subunits are generated from the proenzyme in this reaction, and the pyruvate is formed at the N-terminus of the alpha chain, which is derived from the carboxyl end of the proenzyme. The autoendoproteolytic cleavage occurs by a canonical serine protease mechanism, in which the side chain hydroxyl group of the serine supplies its oxygen atom to form the C-terminus of the beta chain, while the remainder of the serine residue undergoes an oxidative deamination to produce ammonia and the pyruvoyl prosthetic group on the alpha chain. During this reaction, the Ser that is part of the protease active site of the proenzyme becomes the pyruvoyl prosthetic group, which constitutes an essential element of the active site of the mature decarboxylase.

It localises to the membrane. Its subcellular location is the endoplasmic reticulum membrane. The enzyme catalyses a 1,2-diacyl-sn-glycero-3-phospho-L-serine + H(+) = a 1,2-diacyl-sn-glycero-3-phosphoethanolamine + CO2. It participates in phospholipid metabolism; phosphatidylethanolamine biosynthesis; phosphatidylethanolamine from CDP-diacylglycerol: step 2/2. Its activity is regulated as follows. Protease activity is inhibited by PMSF. Catalyzes the formation of phosphatidylethanolamine (PtdEtn) from phosphatidylserine (PtdSer). Plays a central role in phospholipid metabolism and in the interorganelle trafficking of phosphatidylserine. The sequence is that of Phosphatidylserine decarboxylase proenzyme from Plasmodium knowlesi (strain H).